A 102-amino-acid polypeptide reads, in one-letter code: CRISPR-associated endoribonuclease Cas2 (102 aa).

Position 8 (D8) interacts with Mg(2+).

It belongs to the CRISPR-associated endoribonuclease Cas2 protein family. Homodimer, forms a heterotetramer with a Cas1 homodimer. Mg(2+) is required as a cofactor.

Functionally, CRISPR (clustered regularly interspaced short palindromic repeat), is an adaptive immune system that provides protection against mobile genetic elements (viruses, transposable elements and conjugative plasmids). CRISPR clusters contain sequences complementary to antecedent mobile elements and target invading nucleic acids. CRISPR clusters are transcribed and processed into CRISPR RNA (crRNA). Functions as a ssRNA-specific endoribonuclease. Involved in the integration of spacer DNA into the CRISPR cassette. This chain is CRISPR-associated endoribonuclease Cas2, found in Acidovorax ebreus (strain TPSY) (Diaphorobacter sp. (strain TPSY)).